We begin with the raw amino-acid sequence, 1197 residues long: DNA-directed RNA polymerase subunit beta (1197 aa).

The segment covering 581–597 (QANSPLNDDGSFTNPTV) has biased composition (polar residues). Disordered regions lie at residues 581 to 603 (QANSPLNDDGSFTNPTVTARHGD) and 1172 to 1197 (EKPDLFKGDDDDTPRIPATKLDEENV).

This sequence belongs to the RNA polymerase beta chain family. As to quaternary structure, the RNAP catalytic core consists of 2 alpha, 1 beta, 1 beta' and 1 omega subunit. When a sigma factor is associated with the core the holoenzyme is formed, which can initiate transcription.

The catalysed reaction is RNA(n) + a ribonucleoside 5'-triphosphate = RNA(n+1) + diphosphate. Its function is as follows. DNA-dependent RNA polymerase catalyzes the transcription of DNA into RNA using the four ribonucleoside triphosphates as substrates. In Oenococcus oeni (strain ATCC BAA-331 / PSU-1), this protein is DNA-directed RNA polymerase subunit beta.